The following is a 252-amino-acid chain: Indole-3-glycerol phosphate synthase (252 aa).

It belongs to the TrpC family.

It carries out the reaction 1-(2-carboxyphenylamino)-1-deoxy-D-ribulose 5-phosphate + H(+) = (1S,2R)-1-C-(indol-3-yl)glycerol 3-phosphate + CO2 + H2O. Its pathway is amino-acid biosynthesis; L-tryptophan biosynthesis; L-tryptophan from chorismate: step 4/5. This chain is Indole-3-glycerol phosphate synthase, found in Listeria welshimeri serovar 6b (strain ATCC 35897 / DSM 20650 / CCUG 15529 / CIP 8149 / NCTC 11857 / SLCC 5334 / V8).